Here is an 87-residue protein sequence, read N- to C-terminus: U14-lycotoxin-Ls1c (87 aa).

The first 20 residues, 1 to 20 (MNSKVFAVLLLLALLTCILS), serve as a signal peptide directing secretion. Residues 21–66 (EKYCPTPRNTSCKKMNIKNNCCRDSDCTSNAFCCAEPCGNFCHKAS) form the WAP domain. 5 disulfide bridges follow: cysteine 24-cysteine 54, cysteine 32-cysteine 58, cysteine 41-cysteine 53, cysteine 42-cysteine 80, and cysteine 47-cysteine 62.

Belongs to the venom protein 11 family. 01 (wap-1) subfamily. Contains 5 disulfide bonds. As to expression, expressed by the venom gland.

Its subcellular location is the secreted. Its function is as follows. Has antibacterial activity. The sequence is that of U14-lycotoxin-Ls1c from Lycosa singoriensis (Wolf spider).